A 444-amino-acid chain; its full sequence is Protein CLP1 homolog (444 aa).

ATP-binding positions include E33, K72, and D140 to T145.

The protein belongs to the Clp1 family. Clp1 subfamily. Interacts with PCFS4 and SYM5. Forms a complex with cleavage and polyadenylation specificity factor (CPSF) subunits CPSF30, CPSF100, PCFS1, PCFS4, PCFS5, CPSF160 and FY.

The protein localises to the nucleus. Required for endonucleolytic cleavage during polyadenylation-dependent pre-mRNA 3'-end formation. Functions in gametophyte, embryo and postembryotic development. The chain is Protein CLP1 homolog (CLPS3) from Arabidopsis thaliana (Mouse-ear cress).